We begin with the raw amino-acid sequence, 946 residues long: Bifunctional glutamine synthetase adenylyltransferase/adenylyl-removing enzyme (946 aa).

The tract at residues 1-440 (MKPLSSPLQQ…VFNELIGDDE (440 aa)) is adenylyl removase. The interval 449-946 (SEQWRELWQD…ASWQKWLVEE (498 aa)) is adenylyl transferase.

Belongs to the GlnE family. Requires Mg(2+) as cofactor.

The enzyme catalyses [glutamine synthetase]-O(4)-(5'-adenylyl)-L-tyrosine + phosphate = [glutamine synthetase]-L-tyrosine + ADP. It catalyses the reaction [glutamine synthetase]-L-tyrosine + ATP = [glutamine synthetase]-O(4)-(5'-adenylyl)-L-tyrosine + diphosphate. Involved in the regulation of glutamine synthetase GlnA, a key enzyme in the process to assimilate ammonia. When cellular nitrogen levels are high, the C-terminal adenylyl transferase (AT) inactivates GlnA by covalent transfer of an adenylyl group from ATP to specific tyrosine residue of GlnA, thus reducing its activity. Conversely, when nitrogen levels are low, the N-terminal adenylyl removase (AR) activates GlnA by removing the adenylyl group by phosphorolysis, increasing its activity. The regulatory region of GlnE binds the signal transduction protein PII (GlnB) which indicates the nitrogen status of the cell. The protein is Bifunctional glutamine synthetase adenylyltransferase/adenylyl-removing enzyme of Escherichia coli O8 (strain IAI1).